The chain runs to 122 residues: Phycocyanin PC645 alpha-2 subunit (122 aa).

Residues Asp-54 and Arg-68 each coordinate (2R,3E)-phycocyanobilin. Positions 70, 76, 77, and 92 each coordinate mesobiliverdin.

Belongs to the phycoerythrin family. Heterotetramer of 2 different alpha chains and 2 identical beta chains which form 2 alpha-beta heterodimers within the heterotetramer. Contains two phycocyanobilin chromophores and one mesobiliverdin chromophore with binding mediated by both the alpha and beta subunits.

It localises to the plastid. It is found in the chloroplast thylakoid membrane. Functionally, light-harvesting photosynthetic tetrapyrrole chromophore-protein from the phycobiliprotein complex. This is Phycocyanin PC645 alpha-2 subunit from Chroomonas sp. (strain CCMP270).